The chain runs to 426 residues: Histidine--tRNA ligase (426 aa).

The protein belongs to the class-II aminoacyl-tRNA synthetase family. As to quaternary structure, homodimer.

It is found in the cytoplasm. It catalyses the reaction tRNA(His) + L-histidine + ATP = L-histidyl-tRNA(His) + AMP + diphosphate + H(+). The sequence is that of Histidine--tRNA ligase from Streptococcus agalactiae serotype III (strain NEM316).